A 125-amino-acid polypeptide reads, in one-letter code: Protein ApaG (125 aa).

The region spanning 1 to 125 is the ApaG domain; the sequence is MIDAPRIIVQ…FRLAIPSLIN (125 aa).

In Edwardsiella ictaluri (strain 93-146), this protein is Protein ApaG.